The primary structure comprises 152 residues: MFP1 attachment factor 1 (152 aa).

Disordered regions lie at residues 1–33 and 107–152; these read MAEI…PPTQ and DTVK…ETEP. The interval 12–115 is WPP; sequence TVTQETQNKP…IDTVKSRSAP (104 aa). Residues 134 to 152 show a composition bias toward polar residues; sequence EPSSASGLTGEVSSVETEP.

As to quaternary structure, interacts with WAP through its WPP domain. Binds to MFP1 and FPP proteins. In terms of tissue distribution, expressed in young tomato leaves, young fruits, and flowers (at protein level).

It localises to the nucleus envelope. The protein resides in the cytoplasm. Its subcellular location is the golgi apparatus. The protein localises to the nucleus. It is found in the nucleus matrix. This is MFP1 attachment factor 1 (MAF1) from Solanum lycopersicum (Tomato).